The chain runs to 183 residues: Glutathione-regulated potassium-efflux system ancillary protein KefG (183 aa).

Belongs to the NAD(P)H dehydrogenase (quinone) family. KefG subfamily. As to quaternary structure, interacts with KefB.

The protein resides in the cell inner membrane. It catalyses the reaction a quinone + NADH + H(+) = a quinol + NAD(+). The enzyme catalyses a quinone + NADPH + H(+) = a quinol + NADP(+). Functionally, regulatory subunit of a potassium efflux system that confers protection against electrophiles. Required for full activity of KefB. The polypeptide is Glutathione-regulated potassium-efflux system ancillary protein KefG (Salmonella paratyphi C (strain RKS4594)).